Here is a 151-residue protein sequence, read N- to C-terminus: Late embryogenesis abundant protein Lea14-A (151 aa).

This sequence belongs to the LEA type 2 family.

The protein is Late embryogenesis abundant protein Lea14-A (LEA14-A) of Gossypium hirsutum (Upland cotton).